The primary structure comprises 356 residues: MADDLDILRNDTLAALAGAQDRAQWDAIRVGTLGKSGALTGLLKQLGRLEPQERKERGQALNRLRDELTAAIEARGRDIEEEALQARLRSERVDVTMPAPAVVTGTIHPISRTIEEMTAIFGAMGFSVAEGPDIESQWHNFSALNTPEHHPARTEHDTFYLPPKNEDGEPRVLRTQTSGVQIRTMLGSKPPIRIIAPGRTYRADHDATHSPMFHQCEGLVVDRNITLGHLKGCLIEFLRVYFDKPNLPVRFRASYFPFTEPSMEVDIGWSKATGEIGGGSDWLEVLGSGMIHPRVLANCGLDPAEWQGFAFGMGIERLAMLKNGIPDLRSFYESDLRWLRHYGFSAFLPATLTEGV.

Residue Glu-260 coordinates Mg(2+).

This sequence belongs to the class-II aminoacyl-tRNA synthetase family. Phe-tRNA synthetase alpha subunit type 1 subfamily. In terms of assembly, tetramer of two alpha and two beta subunits. Requires Mg(2+) as cofactor.

The protein localises to the cytoplasm. It catalyses the reaction tRNA(Phe) + L-phenylalanine + ATP = L-phenylalanyl-tRNA(Phe) + AMP + diphosphate + H(+). The chain is Phenylalanine--tRNA ligase alpha subunit from Gluconobacter oxydans (strain 621H) (Gluconobacter suboxydans).